We begin with the raw amino-acid sequence, 545 residues long: Putative transcription factor ecdB (545 aa).

Residues 12–39 (CDACRSRRVKCDGQRPSCMGCLSRGLDC) constitute a DNA-binding region (zn(2)-C6 fungal-type). A disordered region spans residues 79 to 99 (PPPVLLASARPSSNPLSSHED).

It is found in the nucleus. The protein is Putative transcription factor ecdB of Aspergillus rugulosus (Emericella rugulosa).